The chain runs to 369 residues: UPF0324 membrane protein DVU_0543 (369 aa).

A run of 9 helical transmembrane segments spans residues 13-31, 46-65, 110-132, 142-164, 171-193, 240-262, 269-291, 306-328, and 341-363; these read IVPG…RTYV, WLVQ…TGMF, GGVA…MWLG, TATM…APGV, LALS…PFIG, WNVV…YWKG, TSLG…GMTA, LHLM…GAYI, and LRIG…LAFI.

The protein belongs to the UPF0324 family.

It localises to the cell membrane. This Nitratidesulfovibrio vulgaris (strain ATCC 29579 / DSM 644 / CCUG 34227 / NCIMB 8303 / VKM B-1760 / Hildenborough) (Desulfovibrio vulgaris) protein is UPF0324 membrane protein DVU_0543.